The following is a 117-amino-acid chain: NLIDFKNMIKCTTKRSVLDFADYGCYCGSGGSGTPVDDLDRCCKVHDDCYGEAEKVHGCWPKWTLYSYDCSNGQLTCKDNNTKCKDFVCNCDRTAAICFAKAPYDDNNFMINNPRCQ.

Cystine bridges form between cysteine 11-cysteine 70, cysteine 25-cysteine 116, cysteine 27-cysteine 43, cysteine 42-cysteine 98, cysteine 49-cysteine 91, cysteine 59-cysteine 84, and cysteine 77-cysteine 89. Residues tyrosine 26, glycine 28, and glycine 30 each contribute to the Ca(2+) site. Histidine 46 is an active-site residue. Aspartate 47 is a Ca(2+) binding site. N-linked (GlcNAc...) asparagine glycosylation occurs at asparagine 80. The active site involves aspartate 92.

Ca(2+) serves as cofactor. Expressed by the venom gland.

The protein localises to the secreted. The catalysed reaction is a 1,2-diacyl-sn-glycero-3-phosphocholine + H2O = a 1-acyl-sn-glycero-3-phosphocholine + a fatty acid + H(+). In terms of biological role, snake venom phospholipase A2 (PLA2) that shows strong myotoxicity and induces edema in mice. Shows no cytotoxicity in vitro. Has a strong anticoagulant effect in vitro. PLA2 catalyzes the calcium-dependent hydrolysis of the 2-acyl groups in 3-sn-phosphoglycerides. This is Acidic phospholipase A2 from Micrurus dumerilii (Coral snake).